The following is a 462-amino-acid chain: Alanine racemase (462 aa).

The active-site Proton acceptor; specific for D-alanine is the K34. K34 carries the post-translational modification N6-(pyridoxal phosphate)lysine. Residues 73 to 132 form a unknown insert region; that stretch reads ASWHESVFRHCEKNYTVIRRSNPVKNSVSQNFFNYFSGLQQCFAPRNDGSSIHATTPKAL. R193 contributes to the substrate binding site. The 47-residue stretch at 286-332 folds into the RPE1 insert domain; sequence DLSNNLSYKEEFEGDTERRTAAYINVREDSSTGSTYKLPLEGGYSRG. Y357 (proton acceptor; specific for L-alanine) is an active-site residue. M405 provides a ligand contact to substrate.

This sequence belongs to the alanine racemase family. Requires pyridoxal 5'-phosphate as cofactor.

It carries out the reaction L-alanine = D-alanine. It participates in amino-acid biosynthesis; D-alanine biosynthesis; D-alanine from L-alanine: step 1/1. Functionally, catalyzes the interconversion of L-alanine and D-alanine. May also act on other amino acids. The protein is Alanine racemase (alr) of Rickettsia felis (strain ATCC VR-1525 / URRWXCal2) (Rickettsia azadi).